We begin with the raw amino-acid sequence, 84 residues long: M-zodatoxin-Lt2a (84 aa).

A signal peptide spans 1-22 (MKYFVIALALAVALVCIAESTA). A propeptide spanning residues 23–58 (YEVNEELENELDDLDDAAWLAVAEELQGLEDFEESR) is cleaved from the precursor. The short motif at 55-58 (EESR) is the Processing quadruplet motif element.

Post-translationally, cleavage of the propeptide depends on the processing quadruplet motif (XXXR, with at least one of X being E). In terms of tissue distribution, expressed by the venom gland.

Its subcellular location is the secreted. In terms of biological role, it has antimicrobial activity against Gram-positive bacteria (A.globiformis VKM Ac-1112 (MIC=0.7 uM), and B.subtilis VKM B-501 (MIC=0.4 uM)), Gram-negative bacteria (E.coli DH5-alpha (MIC=1.0 uM), E.coli MH1 (MIC=0.7 uM), and P.aeruginosa PAO1 (MIC=6.7 uM)), and yeasts (P.pastoris GS115 (MIC=6.7 uM), and S.cerevisiae Y190 (MIC=54 uM)). Also has a strong hemolytic activity against rabbit erythrocytes. Causes paralysis, but is not lethal when injected into insect (M.domestica) larvae. The sequence is that of M-zodatoxin-Lt2a from Lachesana tarabaevi (Spider).